A 151-amino-acid chain; its full sequence is Salivary C-type lectin 2 (151 aa).

Positions 1-15 (MKLLLSFALLGLVAC) are cleaved as a signal peptide. Positions 25-147 (YCFPNEVATW…CTSKRRFVCE (123 aa)) constitute a C-type lectin domain. Cystine bridges form between Cys41/Cys146 and Cys118/Cys138.

It depends on Ca(2+) as a cofactor. In terms of tissue distribution, expressed in female salivary gland. Not detected or low-level expression in female midgut and fat body.

Its subcellular location is the secreted. In terms of biological role, salivary protein with carbohydrate-binding activity. Binds to D-mannose, D-galactose, D-glucose and maltose. Agglutinates host erythrocytes. Probably participates in mosquito innate immune responses to prevent microorganism multiplication in sugar and blood meals. (Microbial infection) Binds to the surface of and agglutinates Escherichia coli in vitro. Its function is as follows. (Microbial infection) Binds to the surface of and agglutinates Pseudomonas aeruginosa in vitro. Functionally, (Microbial infection) Binds to the surface of and agglutinates Bacillus subtilis in vitro. In terms of biological role, (Microbial infection) Agglutinates Staphylococcus aureus in vitro. (Microbial infection) Agglutinates Candida albicans in vitro. Its function is as follows. (Microbial infection) Does not affect replication of dengue virus type 2 in host cells. The protein is Salivary C-type lectin 2 of Aedes albopictus (Asian tiger mosquito).